A 380-amino-acid polypeptide reads, in one-letter code: F-box/kelch-repeat protein At3g18720 (380 aa).

The F-box domain occupies 47 to 94; it reads LWDKQIPTDLLQEILSRLGLKANIHASLVCKTWLKEAVSVRKFQSRPW. Kelch repeat units lie at residues 190-233 and 234-279; these read CVIS…INRC and IFSN…LVRQ.

The sequence is that of F-box/kelch-repeat protein At3g18720 from Arabidopsis thaliana (Mouse-ear cress).